We begin with the raw amino-acid sequence, 207 residues long: Cyclic di-AMP synthase CdaS (207 aa).

Residues 13–37 are a coiled coil; it reads AFKGKIQVYLEQILGDASLILKTLH. The DAC domain maps to 63-205; it reads SFYLQSYIEE…DGVLYPLISP (143 aa).

This sequence belongs to the adenylate cyclase family. DacB/CdaS subfamily. In terms of assembly, forms dimers and probably also hexamers; the dimer may be active while the hexamer may not be active.

It carries out the reaction 2 ATP = 3',3'-c-di-AMP + 2 diphosphate. Functionally, one of 3 paralogous diadenylate cyclases (DAC) in this bacteria, catalyzing the condensation of 2 ATP molecules into cyclic di-AMP (c-di-AMP). Upon expression in E.coli leads to c-di-AMP synthesis. Overexpression of the hyperactive mutant (L44F) in the absence of c-di-AMP phosphodiesterase GdpP leads to growth defects in log phase (long curly cell filaments) that disappear upon sporulation; spore formation is normal, showing sporulation is insensitive to the excess c-di-AMP. In B.subtilis c-di-AMP is a second messenger that mediates growth, DNA repair and cell wall homeostasis; it is toxic when present in excess. The chain is Cyclic di-AMP synthase CdaS from Bacillus subtilis (strain 168).